The sequence spans 474 residues: Glycogen synthase (474 aa).

K12 serves as a coordination point for ADP-alpha-D-glucose.

This sequence belongs to the glycosyltransferase 1 family. Bacterial/plant glycogen synthase subfamily.

It catalyses the reaction [(1-&gt;4)-alpha-D-glucosyl](n) + ADP-alpha-D-glucose = [(1-&gt;4)-alpha-D-glucosyl](n+1) + ADP + H(+). It functions in the pathway glycan biosynthesis; glycogen biosynthesis. Synthesizes alpha-1,4-glucan chains using ADP-glucose. This is Glycogen synthase from Xanthomonas campestris pv. campestris (strain 8004).